We begin with the raw amino-acid sequence, 205 residues long: Holliday junction branch migration complex subunit RuvA (205 aa).

Residues 1–62 (MFEYVTGYVE…EDIMALYGFK (62 aa)) form a domain I region. The tract at residues 63 to 141 (TREERLLFTK…DVVPDVFVDL (79 aa)) is domain II. Positions 142-152 (FSDEERFDEKK) are flexible linker. Residues 153-205 (GSSTELDEALEALRALGYAEREINRVLPELLKESLTTDQYIKKALSLLLNGKR) form a domain III region.

The protein belongs to the RuvA family. As to quaternary structure, homotetramer. Forms an RuvA(8)-RuvB(12)-Holliday junction (HJ) complex. HJ DNA is sandwiched between 2 RuvA tetramers; dsDNA enters through RuvA and exits via RuvB. An RuvB hexamer assembles on each DNA strand where it exits the tetramer. Each RuvB hexamer is contacted by two RuvA subunits (via domain III) on 2 adjacent RuvB subunits; this complex drives branch migration. In the full resolvosome a probable DNA-RuvA(4)-RuvB(12)-RuvC(2) complex forms which resolves the HJ.

Its subcellular location is the cytoplasm. In terms of biological role, the RuvA-RuvB-RuvC complex processes Holliday junction (HJ) DNA during genetic recombination and DNA repair, while the RuvA-RuvB complex plays an important role in the rescue of blocked DNA replication forks via replication fork reversal (RFR). RuvA specifically binds to HJ cruciform DNA, conferring on it an open structure. The RuvB hexamer acts as an ATP-dependent pump, pulling dsDNA into and through the RuvAB complex. HJ branch migration allows RuvC to scan DNA until it finds its consensus sequence, where it cleaves and resolves the cruciform DNA. This chain is Holliday junction branch migration complex subunit RuvA, found in Bacillus cytotoxicus (strain DSM 22905 / CIP 110041 / 391-98 / NVH 391-98).